A 218-amino-acid polypeptide reads, in one-letter code: Large ribosomal subunit protein uL3 (218 aa).

The disordered stretch occupies residues 126 to 169 (HGFSRGPMTHGSKNHRQPGSIGAGTTPGRIYPGKRMSGRYGGKK).

This sequence belongs to the universal ribosomal protein uL3 family. As to quaternary structure, part of the 50S ribosomal subunit. Forms a cluster with proteins L14 and L19.

In terms of biological role, one of the primary rRNA binding proteins, it binds directly near the 3'-end of the 23S rRNA, where it nucleates assembly of the 50S subunit. This chain is Large ribosomal subunit protein uL3, found in Synechococcus sp. (strain CC9902).